A 190-amino-acid polypeptide reads, in one-letter code: Elongation factor P-like protein (190 aa).

Belongs to the elongation factor P family.

In Pseudoalteromonas atlantica (strain T6c / ATCC BAA-1087), this protein is Elongation factor P-like protein.